A 277-amino-acid polypeptide reads, in one-letter code: MAVKKYRPYTPSRRQMTTADFSGLTKKRPEKALTEALPKTGGRNNRGRITSRFIGGGHKRLYRIIDFKRRDKSGVSARVAAIEYDPNRSARIALLHFADGEKRYILAPEGLQVGATINTGPEAEPKLGNALPLRFIPVGAVVHALELVPGKGAQLARSAGTSVQVQGKESEYVIVRLPSGELRRIHTECYATIGAVGNAEHKNINLGKAGRSRWLGRKPHQRGSAMNPVDHPHGGGEGRTGAGRQPVSPWGQLAKGLKTRRKRKNSDRFIVTRRGGK.

2 disordered regions span residues methionine 1–aspartate 20 and glycine 210–lysine 277. A compositionally biased stretch (basic residues) spans glycine 210–glutamine 221.

It belongs to the universal ribosomal protein uL2 family. Part of the 50S ribosomal subunit. Forms a bridge to the 30S subunit in the 70S ribosome.

In terms of biological role, one of the primary rRNA binding proteins. Required for association of the 30S and 50S subunits to form the 70S ribosome, for tRNA binding and peptide bond formation. It has been suggested to have peptidyltransferase activity; this is somewhat controversial. Makes several contacts with the 16S rRNA in the 70S ribosome. The protein is Large ribosomal subunit protein uL2 of Deinococcus deserti (strain DSM 17065 / CIP 109153 / LMG 22923 / VCD115).